A 359-amino-acid polypeptide reads, in one-letter code: UDP-N-acetylglucosamine--N-acetylmuramyl-(pentapeptide) pyrophosphoryl-undecaprenol N-acetylglucosamine transferase (359 aa).

UDP-N-acetyl-alpha-D-glucosamine contacts are provided by residues 12-14 (TGG), Asn-124, Arg-163, Ser-191, Ile-245, 264-269 (ALTVAE), and Gln-290.

The protein belongs to the glycosyltransferase 28 family. MurG subfamily.

The protein localises to the cell inner membrane. The catalysed reaction is di-trans,octa-cis-undecaprenyl diphospho-N-acetyl-alpha-D-muramoyl-L-alanyl-D-glutamyl-meso-2,6-diaminopimeloyl-D-alanyl-D-alanine + UDP-N-acetyl-alpha-D-glucosamine = di-trans,octa-cis-undecaprenyl diphospho-[N-acetyl-alpha-D-glucosaminyl-(1-&gt;4)]-N-acetyl-alpha-D-muramoyl-L-alanyl-D-glutamyl-meso-2,6-diaminopimeloyl-D-alanyl-D-alanine + UDP + H(+). It functions in the pathway cell wall biogenesis; peptidoglycan biosynthesis. Functionally, cell wall formation. Catalyzes the transfer of a GlcNAc subunit on undecaprenyl-pyrophosphoryl-MurNAc-pentapeptide (lipid intermediate I) to form undecaprenyl-pyrophosphoryl-MurNAc-(pentapeptide)GlcNAc (lipid intermediate II). This chain is UDP-N-acetylglucosamine--N-acetylmuramyl-(pentapeptide) pyrophosphoryl-undecaprenol N-acetylglucosamine transferase, found in Nitrosococcus oceani (strain ATCC 19707 / BCRC 17464 / JCM 30415 / NCIMB 11848 / C-107).